Reading from the N-terminus, the 594-residue chain is DNA polymerase II small subunit (594 aa).

It belongs to the DNA polymerase delta/II small subunit family. In terms of assembly, heterodimer of a large subunit and a small subunit.

The enzyme catalyses DNA(n) + a 2'-deoxyribonucleoside 5'-triphosphate = DNA(n+1) + diphosphate. It catalyses the reaction Exonucleolytic cleavage in the 3'- to 5'-direction to yield nucleoside 5'-phosphates.. Functionally, possesses two activities: a DNA synthesis (polymerase) and an exonucleolytic activity that degrades single-stranded DNA in the 3' to 5' direction. Has a template-primer preference which is characteristic of a replicative DNA polymerase. This chain is DNA polymerase II small subunit (polB), found in Methanocaldococcus jannaschii (strain ATCC 43067 / DSM 2661 / JAL-1 / JCM 10045 / NBRC 100440) (Methanococcus jannaschii).